A 174-amino-acid polypeptide reads, in one-letter code: RNA pyrophosphohydrolase (174 aa).

Residues 6–150 (GFRPNVGIVI…KREVYRRVMK (145 aa)) enclose the Nudix hydrolase domain. The short motif at 38–59 (GGVDDGETPEQAMFRELYEEIG) is the Nudix box element.

Belongs to the Nudix hydrolase family. RppH subfamily. The cofactor is a divalent metal cation.

Functionally, accelerates the degradation of transcripts by removing pyrophosphate from the 5'-end of triphosphorylated RNA, leading to a more labile monophosphorylated state that can stimulate subsequent ribonuclease cleavage. The protein is RNA pyrophosphohydrolase of Tolumonas auensis (strain DSM 9187 / NBRC 110442 / TA 4).